A 369-amino-acid chain; its full sequence is Aminomethyltransferase (369 aa).

This sequence belongs to the GcvT family. As to quaternary structure, the glycine cleavage system is composed of four proteins: P, T, L and H.

It catalyses the reaction N(6)-[(R)-S(8)-aminomethyldihydrolipoyl]-L-lysyl-[protein] + (6S)-5,6,7,8-tetrahydrofolate = N(6)-[(R)-dihydrolipoyl]-L-lysyl-[protein] + (6R)-5,10-methylene-5,6,7,8-tetrahydrofolate + NH4(+). The glycine cleavage system catalyzes the degradation of glycine. The sequence is that of Aminomethyltransferase from Xanthomonas axonopodis pv. citri (strain 306).